The chain runs to 472 residues: 3-isopropylmalate dehydratase large subunit (472 aa).

3 residues coordinate [4Fe-4S] cluster: C347, C407, and C410.

Belongs to the aconitase/IPM isomerase family. LeuC type 1 subfamily. In terms of assembly, heterodimer of LeuC and LeuD. [4Fe-4S] cluster serves as cofactor.

The catalysed reaction is (2R,3S)-3-isopropylmalate = (2S)-2-isopropylmalate. Its pathway is amino-acid biosynthesis; L-leucine biosynthesis; L-leucine from 3-methyl-2-oxobutanoate: step 2/4. Catalyzes the isomerization between 2-isopropylmalate and 3-isopropylmalate, via the formation of 2-isopropylmaleate. The sequence is that of 3-isopropylmalate dehydratase large subunit from Opitutus terrae (strain DSM 11246 / JCM 15787 / PB90-1).